Reading from the N-terminus, the 552-residue chain is Urocanate hydratase (552 aa).

NAD(+)-binding positions include 49–50 (GG), Gln-127, 173–175 (GMG), Asp-193, 239–240 (NA), 260–264 (QTSAH), 270–271 (YI), and Tyr-319. Residue Cys-407 is part of the active site. Residue Gly-489 coordinates NAD(+).

Belongs to the urocanase family. NAD(+) serves as cofactor.

The protein resides in the cytoplasm. The catalysed reaction is 4-imidazolone-5-propanoate = trans-urocanate + H2O. The protein operates within amino-acid degradation; L-histidine degradation into L-glutamate; N-formimidoyl-L-glutamate from L-histidine: step 2/3. Its function is as follows. Catalyzes the conversion of urocanate to 4-imidazolone-5-propionate. The sequence is that of Urocanate hydratase from Bacillus anthracis (strain CDC 684 / NRRL 3495).